Here is a 363-residue protein sequence, read N- to C-terminus: Probable L-tyrosine/L-aspartate decarboxylase (363 aa).

Lysine 208 is modified (N6-(pyridoxal phosphate)lysine).

The protein belongs to the group II decarboxylase family. MfnA subfamily. Pyridoxal 5'-phosphate serves as cofactor.

The catalysed reaction is L-tyrosine + H(+) = tyramine + CO2. The enzyme catalyses L-aspartate + H(+) = beta-alanine + CO2. Its pathway is cofactor biosynthesis; methanofuran biosynthesis. It participates in cofactor biosynthesis; coenzyme A biosynthesis. Catalyzes the decarboxylation of L-tyrosine to produce tyramine for methanofuran biosynthesis. Can also catalyze the decarboxylation of L-aspartate to produce beta-alanine for coenzyme A (CoA) biosynthesis. The chain is Probable L-tyrosine/L-aspartate decarboxylase from Methanothermobacter thermautotrophicus (strain ATCC 29096 / DSM 1053 / JCM 10044 / NBRC 100330 / Delta H) (Methanobacterium thermoautotrophicum).